Here is a 345-residue protein sequence, read N- to C-terminus: Methionine import ATP-binding protein MetN 4 (345 aa).

The ABC transporter domain occupies 2–241; the sequence is IELTNITKTF…PQLRTTKRFV (240 aa). 38-45 contributes to the ATP binding site; the sequence is GYSGAGKS.

The protein belongs to the ABC transporter superfamily. Methionine importer (TC 3.A.1.24) family. The complex is composed of two ATP-binding proteins (MetN), two transmembrane proteins (MetI) and a solute-binding protein (MetQ).

Its subcellular location is the cell membrane. The enzyme catalyses L-methionine(out) + ATP + H2O = L-methionine(in) + ADP + phosphate + H(+). The catalysed reaction is D-methionine(out) + ATP + H2O = D-methionine(in) + ADP + phosphate + H(+). Its function is as follows. Part of the ABC transporter complex MetNIQ involved in methionine import. Responsible for energy coupling to the transport system. The sequence is that of Methionine import ATP-binding protein MetN 4 from Oceanobacillus iheyensis (strain DSM 14371 / CIP 107618 / JCM 11309 / KCTC 3954 / HTE831).